The sequence spans 528 residues: MQQNTSLYDSLNVTAAASTSEIKKAYRNAALKYHPDKNNHTEESKRKFQEICQAYEILKDNRLRALYDQYGTTDEVLIQEQQAQAQRQQAGPFSSSSNFDTEAMSFPDLSPGDLFAQFFNSSATPSSNGSKSSFNFSFNNSSTPSFSFVNGSGVNNLYSSSAKYNSNDEDHHLDRGPDIKHNLKCTLKELYMGKTAKLGLNRTRICSVCDGHGGLKKCTCKTCKGQGIQTQTRRMGPLVQSWSQTCADCGGAGVFVKNKDICQQCQGLGFIKERKILQVTVQPGSCHNQLIVLTGEGDEVISTKGGGHEKVIPGDVVITILRLKDPNFQVINYSNLICKKCKIDFMTSLCGGVVYIEGHPSGKLIKLDIIPGEILKPGCFKTVEDMGMPKFINGVRSGFGHLYVKFDVTYPERLEPENAKKIQNILANDKYIKAERSTMETADSDCYCDLEKSYDSVEEHVLSSFEAPNLNNEVIEDDDLGDLINERDSRKRNNRRFDESNINNNNETKRNKYSSPVSGFYDHDINGY.

A J domain is found at 4 to 73 (NTSLYDSLNV…RALYDQYGTT (70 aa)). The CR-type zinc-finger motif lies at 193–274 (GKTAKLGLNR…CQGLGFIKER (82 aa)). 4 CXXCXGXG motif repeats span residues 206–213 (CSVCDGHG), 218–225 (CTCKTCKG), 246–253 (CADCGGAG), and 262–269 (CQQCQGLG). Residues 485–499 (NERDSRKRNNRRFDE) are compositionally biased toward basic and acidic residues. The tract at residues 485–528 (NERDSRKRNNRRFDESNINNNNETKRNKYSSPVSGFYDHDINGY) is disordered.

Its subcellular location is the cytoplasm. It is found in the nucleus. Its function is as follows. Putative chaperone involved in protein folding. Interferes with propagation of [PSI+] prion when overproduced. This chain is J domain-containing protein APJ1 (APJ1), found in Saccharomyces cerevisiae (strain ATCC 204508 / S288c) (Baker's yeast).